We begin with the raw amino-acid sequence, 279 residues long: Proto-oncogene FRAT1 (279 aa).

Disordered stretches follow at residues 1-24 and 56-76; these read MPCR…EEDS and AQHS…APGP. Residues 7 to 24 show a composition bias toward acidic residues; that stretch reads EEEEAGEEAEGEEEEEDS. Serine 88 carries the phosphoserine modification. Disordered regions lie at residues 136–200 and 228–279; these read GPSA…DDPH and RAKL…VPGS. An involved in GSK-3 binding region spans residues 198-220; sequence DPHRLLQQLVLSGNLIKEAVRRL. Serine 249 and serine 252 each carry phosphoserine.

This sequence belongs to the GSK-3-binding protein family. As to quaternary structure, binds DVL1. Binds GSK-3 and prevent GSK-3-dependent phosphorylation. Phosphorylated.

Its subcellular location is the cytoplasm. Functionally, positively regulates the Wnt signaling pathway by stabilizing beta-catenin through the association with GSK-3. May play a role in tumor progression and collaborate with PIM1 and MYC in lymphomagenesis. This is Proto-oncogene FRAT1 (FRAT1) from Homo sapiens (Human).